The sequence spans 69 residues: Cytochrome c oxidase subunit 8A, mitochondrial (69 aa).

The N-terminal 25 residues, 1–25 (MSVLTPLLLRGLTGSARRLPVPCAR), are a transit peptide targeting the mitochondrion. The short motif at 2 to 19 (SVLTPLLLRGLTGSARRL) is the SIFI-degron element. Residues 26–36 (VHSKPPREQLG) lie on the Mitochondrial matrix side of the membrane. The chain crosses the membrane as a helical span at residues 37-60 (TMDIAIGLTSCFVCFLLPSGWVLS). The Mitochondrial intermembrane portion of the chain corresponds to 61-69 (HLENYKKRE).

It belongs to the cytochrome c oxidase VIII family. In terms of assembly, component of the cytochrome c oxidase (complex IV, CIV), a multisubunit enzyme composed of 14 subunits. The complex is composed of a catalytic core of 3 subunits MT-CO1, MT-CO2 and MT-CO3, encoded in the mitochondrial DNA, and 11 supernumerary subunits COX4I, COX5A, COX5B, COX6A, COX6B, COX6C, COX7A, COX7B, COX7C, COX8 and NDUFA4, which are encoded in the nuclear genome. The complex exists as a monomer or a dimer and forms supercomplexes (SCs) in the inner mitochondrial membrane with NADH-ubiquinone oxidoreductase (complex I, CI) and ubiquinol-cytochrome c oxidoreductase (cytochrome b-c1 complex, complex III, CIII), resulting in different assemblies (supercomplex SCI(1)III(2)IV(1) and megacomplex MCI(2)III(2)IV(2)). Post-translationally, in response to mitochondrial stress, the precursor protein is ubiquitinated by the SIFI complex in the cytoplasm before mitochondrial import, leading to its degradation. Within the SIFI complex, UBR4 initiates ubiquitin chain that are further elongated or branched by KCMF1.

The protein localises to the mitochondrion inner membrane. It functions in the pathway energy metabolism; oxidative phosphorylation. In terms of biological role, component of the cytochrome c oxidase, the last enzyme in the mitochondrial electron transport chain which drives oxidative phosphorylation. The respiratory chain contains 3 multisubunit complexes succinate dehydrogenase (complex II, CII), ubiquinol-cytochrome c oxidoreductase (cytochrome b-c1 complex, complex III, CIII) and cytochrome c oxidase (complex IV, CIV), that cooperate to transfer electrons derived from NADH and succinate to molecular oxygen, creating an electrochemical gradient over the inner membrane that drives transmembrane transport and the ATP synthase. Cytochrome c oxidase is the component of the respiratory chain that catalyzes the reduction of oxygen to water. Electrons originating from reduced cytochrome c in the intermembrane space (IMS) are transferred via the dinuclear copper A center (CU(A)) of subunit 2 and heme A of subunit 1 to the active site in subunit 1, a binuclear center (BNC) formed by heme A3 and copper B (CU(B)). The BNC reduces molecular oxygen to 2 water molecules using 4 electrons from cytochrome c in the IMS and 4 protons from the mitochondrial matrix. This chain is Cytochrome c oxidase subunit 8A, mitochondrial (COX8A), found in Otolemur crassicaudatus (Brown greater galago).